The chain runs to 497 residues: G protein-coupled receptor gprM (497 aa).

Asn3 carries an N-linked (GlcNAc...) asparagine glycan. Helical transmembrane passes span 66-86 (ISVA…VLPV), 98-118 (FTLG…PLGV), 138-158 (CAFT…WSFL), 179-199 (WGAL…MLIL), and 221-241 (YWIP…ATMA). An N-linked (GlcNAc...) asparagine glycan is attached at Asn259. Transmembrane regions (helical) follow at residues 293–313 (VTLV…FIEL) and 357–377 (LLLA…ILFA). N-linked (GlcNAc...) asparagine glycosylation occurs at Asn421. The tract at residues 428–497 (YKSPSPMVRS…APAVYREYDD (70 aa)) is disordered.

This sequence belongs to the G-protein coupled receptor GPR1/git3 family. Interacts with gpaA.

The protein resides in the cell membrane. Functionally, g protein-coupled receptor that plays a role in conidiation and regulation of the biosynthesis of secondary metabolites such as dihydroxynaphthalene (DHN)-melanin, via interaction with the G-protein complex alpha subunit gpaA. This is G protein-coupled receptor gprM from Aspergillus fumigatus (strain CBS 144.89 / FGSC A1163 / CEA10) (Neosartorya fumigata).